The primary structure comprises 359 residues: UPF0283 membrane protein R01807 (359 aa).

The next 2 membrane-spanning stretches (helical) occupy residues Phe-76–Ile-96 and Trp-109–Val-129.

The protein belongs to the UPF0283 family.

It localises to the cell inner membrane. This chain is UPF0283 membrane protein R01807, found in Rhizobium meliloti (strain 1021) (Ensifer meliloti).